A 117-amino-acid chain; its full sequence is uncharacterized protein (117 aa).

Residues 1-24 (MMTEFGSAMTLVTGLVAYGAYVKS) form the signal peptide. The interval 42-117 (EKENFNYNNN…NNQIKRRLFD (76 aa)) is disordered. Positions 46-95 (FNYNNNNNNNNNNNNNNSNNNDNNNNNNSNSNNNNNNNNNNNNNNNNNIN) are enriched in low complexity. N-linked (GlcNAc...) asparagine glycans are attached at residues N61 and N72. Over residues 96–110 (DKQINGTNIFDSNNQ) the composition is skewed to polar residues.

The protein resides in the secreted. This is an uncharacterized protein from Dictyostelium discoideum (Social amoeba).